Consider the following 336-residue polypeptide: Holliday junction branch migration complex subunit RuvB (336 aa).

Residues 1–181 are large ATPase domain (RuvB-L); the sequence is MDRIVEIEKV…FGMDFRLQFY (181 aa). ATP is bound by residues Leu20, Arg21, Gly62, Lys65, Thr66, Thr67, 128–130, Arg171, Tyr181, and Arg218; that span reads EDF. Thr66 serves as a coordination point for Mg(2+). The interval 182-252 is small ATPAse domain (RuvB-S); that stretch reads TSSELSRIVQ…RAKEGLNALG (71 aa). A head domain (RuvB-H) region spans residues 255-336; sequence SLGFDEMDIR…KIDIEKGLFE (82 aa). DNA-binding residues include Arg309 and Arg314.

This sequence belongs to the RuvB family. As to quaternary structure, homohexamer. Forms an RuvA(8)-RuvB(12)-Holliday junction (HJ) complex. HJ DNA is sandwiched between 2 RuvA tetramers; dsDNA enters through RuvA and exits via RuvB. An RuvB hexamer assembles on each DNA strand where it exits the tetramer. Each RuvB hexamer is contacted by two RuvA subunits (via domain III) on 2 adjacent RuvB subunits; this complex drives branch migration. In the full resolvosome a probable DNA-RuvA(4)-RuvB(12)-RuvC(2) complex forms which resolves the HJ.

The protein resides in the cytoplasm. It carries out the reaction ATP + H2O = ADP + phosphate + H(+). The RuvA-RuvB-RuvC complex processes Holliday junction (HJ) DNA during genetic recombination and DNA repair, while the RuvA-RuvB complex plays an important role in the rescue of blocked DNA replication forks via replication fork reversal (RFR). RuvA specifically binds to HJ cruciform DNA, conferring on it an open structure. The RuvB hexamer acts as an ATP-dependent pump, pulling dsDNA into and through the RuvAB complex. RuvB forms 2 homohexamers on either side of HJ DNA bound by 1 or 2 RuvA tetramers; 4 subunits per hexamer contact DNA at a time. Coordinated motions by a converter formed by DNA-disengaged RuvB subunits stimulates ATP hydrolysis and nucleotide exchange. Immobilization of the converter enables RuvB to convert the ATP-contained energy into a lever motion, pulling 2 nucleotides of DNA out of the RuvA tetramer per ATP hydrolyzed, thus driving DNA branch migration. The RuvB motors rotate together with the DNA substrate, which together with the progressing nucleotide cycle form the mechanistic basis for DNA recombination by continuous HJ branch migration. Branch migration allows RuvC to scan DNA until it finds its consensus sequence, where it cleaves and resolves cruciform DNA. This is Holliday junction branch migration complex subunit RuvB from Campylobacter concisus (strain 13826).